A 673-amino-acid chain; its full sequence is Translation factor GUF1 homolog, mitochondrial (673 aa).

The region spanning 68-260 is the tr-type G domain; sequence ERIRNFSIIA…AVIERIPSPP (193 aa). Residues 77-84, 153-157, and 207-210 contribute to the GTP site; these read AHVDHGKS, DTPGH, and NKID.

This sequence belongs to the TRAFAC class translation factor GTPase superfamily. Classic translation factor GTPase family. LepA subfamily.

The protein localises to the mitochondrion inner membrane. The enzyme catalyses GTP + H2O = GDP + phosphate + H(+). Functionally, promotes mitochondrial protein synthesis. May act as a fidelity factor of the translation reaction, by catalyzing a one-codon backward translocation of tRNAs on improperly translocated ribosomes. Binds to mitochondrial ribosomes in a GTP-dependent manner. The protein is Translation factor GUF1 homolog, mitochondrial of Ricinus communis (Castor bean).